Here is a 414-residue protein sequence, read N- to C-terminus: Eukaryotic initiation factor 4A-3 (414 aa).

Alanine 2 bears the N-acetylalanine mark. The Q motif motif lies at 41–69 (DSFDAMELQPDLLRGIYAYGFEKPSAIQQ). In terms of domain architecture, Helicase ATP-binding spans 72–242 (IIPFCKGLDV…RKFMNKPVRI (171 aa)). 85 to 92 (AQSGTGKT) serves as a coordination point for ATP. At serine 106 the chain carries Phosphoserine. At threonine 147 the chain carries Phosphothreonine. Positions 190 to 193 (DEAD) match the DEAD box motif. Residues 253–414 (GIKQFYVNVD…ELPSNVADLL (162 aa)) form the Helicase C-terminal domain.

The protein belongs to the DEAD box helicase family. eIF4A subfamily. In terms of assembly, eIF4F is a multi-subunit complex, the composition of which varies with external and internal environmental conditions. It is composed of at least EIF4A, EIF4E and EIF4G.

It localises to the cytoplasm. It carries out the reaction ATP + H2O = ADP + phosphate + H(+). In terms of biological role, ATP-dependent RNA helicase which is a subunit of the eIF4F complex involved in cap recognition and is required for mRNA binding to ribosome. In the current model of translation initiation, eIF4A unwinds RNA secondary structures in the 5'-UTR of mRNAs which is necessary to allow efficient binding of the small ribosomal subunit, and subsequent scanning for the initiator codon. The chain is Eukaryotic initiation factor 4A-3 (TIF4A-3) from Arabidopsis thaliana (Mouse-ear cress).